Here is a 434-residue protein sequence, read N- to C-terminus: Enolase (434 aa).

H158 and E167 together coordinate substrate. Catalysis depends on E210, which acts as the Proton donor. Residues D245, E294, and D319 each coordinate Mg(2+). Residues E294 and D319 each coordinate substrate. K344 functions as the Proton acceptor in the catalytic mechanism. Substrate-binding positions include 371 to 374 and K395; that span reads SHRS.

It belongs to the enolase family. Homodimer. It depends on Mg(2+) as a cofactor.

It localises to the cytoplasm. The catalysed reaction is (2R)-2-phosphoglycerate = phosphoenolpyruvate + H2O. The protein operates within carbohydrate degradation; glycolysis; pyruvate from D-glyceraldehyde 3-phosphate: step 4/5. This Caenorhabditis elegans protein is Enolase.